The following is a 131-amino-acid chain: Large ribosomal subunit protein bL17 (131 aa).

This sequence belongs to the bacterial ribosomal protein bL17 family. In terms of assembly, part of the 50S ribosomal subunit. Contacts protein L32.

This is Large ribosomal subunit protein bL17 from Herminiimonas arsenicoxydans.